The sequence spans 39 residues: Bomanin Short 3 (39 aa).

Residues 1–18 (MKFLSLAFVLGLLALANA) form the signal peptide. Residues 19–23 (TPLNP) constitute a propeptide that is removed on maturation. Residues Cys32 and Cys35 are joined by a disulfide bond.

Belongs to the bomanin family. Hemolymph (at protein level).

The protein resides in the secreted. Secreted immune-induced peptide induced by Toll signaling. Has a role in resistance bacterial and fungal infections. The strength of antimicrobial activity appears to correlate with the overall level of expression. Has no activity against the fungus C.glabrata in vitro. The polypeptide is Bomanin Short 3 (Drosophila melanogaster (Fruit fly)).